The following is a 113-amino-acid chain: Large ribosomal subunit protein uL22 (113 aa).

The protein belongs to the universal ribosomal protein uL22 family. In terms of assembly, part of the 50S ribosomal subunit.

Its function is as follows. This protein binds specifically to 23S rRNA; its binding is stimulated by other ribosomal proteins, e.g. L4, L17, and L20. It is important during the early stages of 50S assembly. It makes multiple contacts with different domains of the 23S rRNA in the assembled 50S subunit and ribosome. Functionally, the globular domain of the protein is located near the polypeptide exit tunnel on the outside of the subunit, while an extended beta-hairpin is found that lines the wall of the exit tunnel in the center of the 70S ribosome. The chain is Large ribosomal subunit protein uL22 from Natranaerobius thermophilus (strain ATCC BAA-1301 / DSM 18059 / JW/NM-WN-LF).